Here is a 243-residue protein sequence, read N- to C-terminus: Chromosome partition protein MukE (243 aa).

The disordered stretch occupies residues 223–243 (LMENDTKSADEIDEEFDGEQE). Residues 233 to 243 (EIDEEFDGEQE) show a composition bias toward acidic residues.

It belongs to the MukE family. In terms of assembly, interacts, and probably forms a ternary complex, with MukF and MukB. The complex formation is stimulated by calcium or magnesium.

It is found in the cytoplasm. It localises to the nucleoid. Its function is as follows. Involved in chromosome condensation, segregation and cell cycle progression. May participate in facilitating chromosome segregation by condensation DNA from both sides of a centrally located replisome during cell division. Probably acts via its interaction with MukB and MukF. This Haemophilus influenzae (strain ATCC 51907 / DSM 11121 / KW20 / Rd) protein is Chromosome partition protein MukE.